Reading from the N-terminus, the 155-residue chain is SsrA-binding protein (155 aa).

This sequence belongs to the SmpB family.

The protein resides in the cytoplasm. In terms of biological role, required for rescue of stalled ribosomes mediated by trans-translation. Binds to transfer-messenger RNA (tmRNA), required for stable association of tmRNA with ribosomes. tmRNA and SmpB together mimic tRNA shape, replacing the anticodon stem-loop with SmpB. tmRNA is encoded by the ssrA gene; the 2 termini fold to resemble tRNA(Ala) and it encodes a 'tag peptide', a short internal open reading frame. During trans-translation Ala-aminoacylated tmRNA acts like a tRNA, entering the A-site of stalled ribosomes, displacing the stalled mRNA. The ribosome then switches to translate the ORF on the tmRNA; the nascent peptide is terminated with the 'tag peptide' encoded by the tmRNA and targeted for degradation. The ribosome is freed to recommence translation, which seems to be the essential function of trans-translation. The polypeptide is SsrA-binding protein (Moorella thermoacetica (strain ATCC 39073 / JCM 9320)).